Reading from the N-terminus, the 209-residue chain is MKPIRIGIGGPVGSGKTSLVDQLTRVMHEHYHVAVITNDIYTREDAQYLITNGVLAEERIIGVETGGCPHTAIREDASMNFAAIDDLTKRFKNLDIIFIESGGDNLSATFSPELVHGYIYVIDVAEGQDIPRKGGPALTRSDLLLINKTSLAPHVGVDLDIMDQDVKKMRGGRPYIFADVRSQTNVDKVVEWIQHHMLLEGAEAVDNHG.

10 to 17 is a binding site for GTP; it reads GPVGSGKT.

This sequence belongs to the SIMIBI class G3E GTPase family. UreG subfamily. As to quaternary structure, homodimer. UreD, UreF and UreG form a complex that acts as a GTP-hydrolysis-dependent molecular chaperone, activating the urease apoprotein by helping to assemble the nickel containing metallocenter of UreC. The UreE protein probably delivers the nickel.

Its subcellular location is the cytoplasm. Its function is as follows. Facilitates the functional incorporation of the urease nickel metallocenter. This process requires GTP hydrolysis, probably effectuated by UreG. This Lysinibacillus sphaericus (strain C3-41) protein is Urease accessory protein UreG.